The chain runs to 25 residues: Oxyopinin-3c (25 aa).

In terms of tissue distribution, expressed by the venom gland.

It localises to the secreted. Its function is as follows. May have cytolytic and antimicrobial activity. This chain is Oxyopinin-3c, found in Oxyopes takobius (Lynx spider).